A 289-amino-acid polypeptide reads, in one-letter code: Thymidylate synthase (289 aa).

DUMP is bound by residues Arg26 and 151-152 (RR). Cys171 (nucleophile) is an active-site residue. DUMP-binding positions include 191 to 194 (RSGD), Asn202, and 232 to 234 (HVY). Asp194 contacts (6R)-5,10-methylene-5,6,7,8-tetrahydrofolate. Ala288 contacts (6R)-5,10-methylene-5,6,7,8-tetrahydrofolate.

It belongs to the thymidylate synthase family. As to quaternary structure, homodimer.

It catalyses the reaction dUMP + (6R)-5,10-methylene-5,6,7,8-tetrahydrofolate = 7,8-dihydrofolate + dTMP. The protein operates within pyrimidine metabolism; dTTP biosynthesis. In Equus caballus (Horse), this protein is Thymidylate synthase.